The sequence spans 193 residues: MATDEATKPSPIPPYPEMILAAIEGLDDKSGSNKSAISKYIEGKYGSLPPAHASLLTAHLARMKESGELVFLKNNYFRAGAPDAPPKRGRGRPPKARDPNAPAPAPKSPSSTGRGRGRPPKAKSPLEAAVKQATAGMPKPRGRPPKKAKTDGAASPSPSPAPAPAGDGSTPGKRGRGRPPKVRPAVPSETAAA.

Positions 11 to 81 (PIPPYPEMIL…LKNNYFRAGA (71 aa)) constitute an H15 domain. The segment at 75–193 (NYFRAGAPDA…PAVPSETAAA (119 aa)) is disordered. The short motif at 86–92 (PKRGRGR) is the Nuclear localization signal 1 (NLS) element. 4 DNA-binding regions (a.T hook) span residues 87–98 (KRGRGRPPKARD), 113–124 (GRGRGRPPKAKS), 138–149 (PKPRGRPPKKAK), and 173–184 (KRGRGRPPKVRP). The short motif at 145 to 149 (PKKAK) is the Nuclear localization signal 2 (NLS) element.

Belongs to the histone H1/H5 family. Post-translationally, phosphorylated by CDK, this phosphorylation prevents DNA-binding. Motility is increased when hypophosphorylated. Acetylated.

Its subcellular location is the nucleus. The protein resides in the nucleolus. Binds A/T-rich DNA (e.g. present in the storage gamma-zein gene promoter) with a highly dynamic distribution into the nucleus. Probably involved in endosperm development, during cells shift from a mitotic cycle to endoreduplication leading to massive synthesis of storage proteins (zeins) and starch. The chain is HMG-Y-related protein A from Zea mays (Maize).